The chain runs to 775 residues: Glycerol-3-phosphate acyltransferase (775 aa).

The HXXXXD motif motif lies at 268 to 273 (HRSYID).

Belongs to the GPAT/DAPAT family.

It is found in the cell membrane. The enzyme catalyses sn-glycerol 3-phosphate + an acyl-CoA = a 1-acyl-sn-glycero-3-phosphate + CoA. The protein operates within phospholipid metabolism; CDP-diacylglycerol biosynthesis; CDP-diacylglycerol from sn-glycerol 3-phosphate: step 1/3. This is Glycerol-3-phosphate acyltransferase (plsB) from Mycobacterium leprae (strain TN).